A 360-amino-acid polypeptide reads, in one-letter code: Inward rectifier potassium channel 13 (360 aa).

Residues 1–50 lie on the Cytoplasmic side of the membrane; sequence MESSNCKVITPLLSQRHRRMVTKDGHSTLQTDGAPRGLVYLRDAWGTLID. The chain crosses the membrane as a helical span at residues 51 to 77; the sequence is MRWRWVMLVFSASFVLHWLVFAVLWYV. The Extracellular portion of the chain corresponds to 78-105; that stretch reads LAEMNGDLELDHDAPPENHTICVKYITS. Residues 106–122 constitute an intramembrane region (helical; Pore-forming); it reads FTAAFSFSLETQLTIGY. The Selectivity filter motif lies at 119–124; sequence TIGYGT. Residues 123–131 lie on the Extracellular side of the membrane; sequence GTMFPSGDC. A helical transmembrane segment spans residues 132-157; the sequence is PSAIALLAIQMLLGLMLEAFITGAFV. Topologically, residues 158–360 are cytoplasmic; that stretch reads AKIARPKNRA…FQISETGLTE (203 aa). Ser-201 is modified (phosphoserine; by PKC). Ser-287 is subject to Phosphoserine; by PKA.

This sequence belongs to the inward rectifier-type potassium channel (TC 1.A.2.1) family. KCNJ13 subfamily. In terms of assembly, homotetramer. Phosphorylation at Ser-201 by PKC strongly inhibits ionic currents, while phosphorylation at Ser-287 by PKA increases them.

Its subcellular location is the membrane. It localises to the cell membrane. It catalyses the reaction K(+)(in) = K(+)(out). Inhibited by Ba(2+) and Cs(+), although sensitivity to those inhibitors is much lower than in other Kir channels. Its function is as follows. Inward rectifier potassium channels are characterized by a greater tendency to allow potassium to flow into the cell rather than out of it. Their voltage dependence is regulated by the concentration of extracellular potassium; as external potassium is raised, the voltage range of the channel opening shifts to more positive voltages. The inward rectification is mainly due to the blockage of outward current by internal magnesium. KCNJ13 has a very low single channel conductance, low sensitivity to block by external barium and cesium, and no dependence of its inward rectification properties on the internal blocking particle magnesium. The polypeptide is Inward rectifier potassium channel 13 (KCNJ13) (Cavia porcellus (Guinea pig)).